The following is a 193-amino-acid chain: Transmembrane protein 066L (193 aa).

2 helical membrane passes run 14–34 (VLFA…GLVW) and 48–68 (LVVE…LVVV).

Belongs to the IIV-6 357R family.

The protein localises to the membrane. The sequence is that of Transmembrane protein 066L from Invertebrate iridescent virus 3 (IIV-3).